The sequence spans 181 residues: Inorganic pyrophosphatase 2 (181 aa).

Substrate-binding residues include lysine 30, arginine 44, and tyrosine 56. Positions 66, 71, and 103 each coordinate Mg(2+). Tyrosine 142 lines the substrate pocket.

Belongs to the PPase family. In terms of assembly, homohexamer. It depends on Mg(2+) as a cofactor.

It localises to the cytoplasm. It carries out the reaction diphosphate + H2O = 2 phosphate + H(+). Functionally, catalyzes the hydrolysis of inorganic pyrophosphate (PPi) forming two phosphate ions. The protein is Inorganic pyrophosphatase 2 of Pseudomonas syringae pv. tomato (strain ATCC BAA-871 / DC3000).